Here is a 245-residue protein sequence, read N- to C-terminus: 1-(5-phosphoribosyl)-5-[(5-phosphoribosylamino)methylideneamino] imidazole-4-carboxamide isomerase (245 aa).

The active-site Proton acceptor is Asp-7. Asp-129 serves as the catalytic Proton donor.

Belongs to the HisA/HisF family.

Its subcellular location is the cytoplasm. It carries out the reaction 1-(5-phospho-beta-D-ribosyl)-5-[(5-phospho-beta-D-ribosylamino)methylideneamino]imidazole-4-carboxamide = 5-[(5-phospho-1-deoxy-D-ribulos-1-ylimino)methylamino]-1-(5-phospho-beta-D-ribosyl)imidazole-4-carboxamide. It functions in the pathway amino-acid biosynthesis; L-histidine biosynthesis; L-histidine from 5-phospho-alpha-D-ribose 1-diphosphate: step 4/9. This chain is 1-(5-phosphoribosyl)-5-[(5-phosphoribosylamino)methylideneamino] imidazole-4-carboxamide isomerase, found in Escherichia coli O7:K1 (strain IAI39 / ExPEC).